The sequence spans 304 residues: Lipoprotein signal peptidase (304 aa).

3 consecutive transmembrane segments (helical) span residues 28 to 48, 86 to 106, and 112 to 132; these read IKIKYPILAVMGFFVLLIVFV, PAVPYLLQSLLTIIFLITFIF, and LIVLLPLITFGGLANVIDRSV. Active-site residues include D148 and D163. Residues 163 to 183 traverse the membrane as a helical segment; that stretch reads DICIVTGFALIFLTFVVDIFL.

The protein belongs to the peptidase A8 family.

The protein localises to the cell membrane. The catalysed reaction is Release of signal peptides from bacterial membrane prolipoproteins. Hydrolyzes -Xaa-Yaa-Zaa-|-(S,diacylglyceryl)Cys-, in which Xaa is hydrophobic (preferably Leu), and Yaa (Ala or Ser) and Zaa (Gly or Ala) have small, neutral side chains.. The protein operates within protein modification; lipoprotein biosynthesis (signal peptide cleavage). Functionally, this protein specifically catalyzes the removal of signal peptides from prolipoproteins. The sequence is that of Lipoprotein signal peptidase from Mycoplasmoides gallisepticum (strain R(low / passage 15 / clone 2)) (Mycoplasma gallisepticum).